A 119-amino-acid polypeptide reads, in one-letter code: Ribonuclease P protein component (119 aa).

Belongs to the RnpA family. As to quaternary structure, consists of a catalytic RNA component (M1 or rnpB) and a protein subunit.

It carries out the reaction Endonucleolytic cleavage of RNA, removing 5'-extranucleotides from tRNA precursor.. Its function is as follows. RNaseP catalyzes the removal of the 5'-leader sequence from pre-tRNA to produce the mature 5'-terminus. It can also cleave other RNA substrates such as 4.5S RNA. The protein component plays an auxiliary but essential role in vivo by binding to the 5'-leader sequence and broadening the substrate specificity of the ribozyme. This chain is Ribonuclease P protein component, found in Shewanella woodyi (strain ATCC 51908 / MS32).